A 250-amino-acid polypeptide reads, in one-letter code: Mediator of RNA polymerase II transcription subunit 8 (250 aa).

Residues 217–250 (SPMSAVSPGAGPLGKMPSGIKTNIKSANQVHPYR) are disordered. Over residues 236–250 (IKTNIKSANQVHPYR) the composition is skewed to polar residues.

Belongs to the Mediator complex subunit 8 family. As to quaternary structure, component of the Mediator complex.

It localises to the nucleus. Component of the Mediator complex, a coactivator involved in the regulated transcription of nearly all RNA polymerase II-dependent genes. Mediator functions as a bridge to convey information from gene-specific regulatory proteins to the basal RNA polymerase II transcription machinery. Mediator is recruited to promoters by direct interactions with regulatory proteins and serves as a scaffold for the assembly of a functional preinitiation complex with RNA polymerase II and the general transcription factors. This Aedes aegypti (Yellowfever mosquito) protein is Mediator of RNA polymerase II transcription subunit 8 (MED8).